Reading from the N-terminus, the 576-residue chain is Deformed epidermal autoregulatory factor 1 (576 aa).

Disordered regions lie at residues 52–76 (VTSSSNDNSGSGGASGGTSGAGGGN), 189–215 (AGGASGVGGGGGGTGGGSSGWSENPST), and 309–362 (ESAS…SGSG). Gly residues-rich tracts occupy residues 61-76 (GSGGASGGTSGAGGGN) and 191-207 (GASGVGGGGGGTGGGSS). The SAND domain maps to 210-291 (SENPSTQHNE…QSLIDEGTLT (82 aa)). Residues 324 to 340 (RKRNQTDLDMESGPKRK) carry the Nuclear localization signal motif. Low complexity predominate over residues 345-362 (HSNNNNSNTNNNNTSGSG). Zn(2+)-binding residues include Cys-521, Cys-524, Cys-532, Cys-535, Cys-541, Cys-545, His-553, and Cys-557. Residues 521–557 (CANCNREALAECSLCRKTPYCSEFCQRKDWNAHQVEC) form an MYND-type zinc finger.

The protein resides in the nucleus. In terms of biological role, transcription factor that binds the homeotic Deformed (Dfd) response element. High affinity binding sites contain at least 1 TTCG motif surrounded by additional TCG sequences. May be involved in the selective action of Dfd on these sites without binding directly to the Dfd protein. Requirement of DEAF1 activity may be a common feature of enhancers targeted by Dfd. The protein is Deformed epidermal autoregulatory factor 1 (Deaf1) of Drosophila melanogaster (Fruit fly).